Consider the following 57-residue polypeptide: uncharacterized protein (57 aa).

Residues A34–V54 traverse the membrane as a helical segment.

It localises to the membrane. This is an uncharacterized protein from Dictyostelium discoideum (Social amoeba).